The following is a 378-amino-acid chain: Putative glutamate--cysteine ligase 2 (378 aa).

The protein belongs to the glutamate--cysteine ligase type 2 family. YbdK subfamily.

The catalysed reaction is L-cysteine + L-glutamate + ATP = gamma-L-glutamyl-L-cysteine + ADP + phosphate + H(+). ATP-dependent carboxylate-amine ligase which exhibits weak glutamate--cysteine ligase activity. This Salinispora arenicola (strain CNS-205) protein is Putative glutamate--cysteine ligase 2.